The following is a 471-amino-acid chain: Alpha-1,3/1,6-mannosyltransferase alg-2 (471 aa).

2 N-linked (GlcNAc...) asparagine glycosylation sites follow: asparagine 178 and asparagine 279. Residues 446-466 (GMILLVVGAAVAAVAGVISAV) form a helical membrane-spanning segment.

This sequence belongs to the glycosyltransferase group 1 family. Glycosyltransferase 4 subfamily.

The protein localises to the endoplasmic reticulum membrane. It carries out the reaction a beta-D-Man-(1-&gt;4)-beta-D-GlcNAc-(1-&gt;4)-alpha-D-GlcNAc-diphospho-di-trans,poly-cis-dolichol + GDP-alpha-D-mannose = an alpha-D-Man-(1-&gt;3)-beta-D-Man-(1-&gt;4)-beta-D-GlcNAc-(1-&gt;4)-alpha-D-GlcNAc-diphospho-di-trans,poly-cis-dolichol + GDP + H(+). The catalysed reaction is an alpha-D-Man-(1-&gt;3)-beta-D-Man-(1-&gt;4)-beta-D-GlcNAc-(1-&gt;4)-alpha-D-GlcNAc-diphospho-di-trans,poly-cis-dolichol + GDP-alpha-D-mannose = an alpha-D-Man-(1-&gt;3)-[alpha-D-Man-(1-&gt;6)]-beta-D-Man-(1-&gt;4)-beta-D-GlcNAc-(1-&gt;4)-alpha-D-GlcNAc-diphospho-di-trans,poly-cis-dolichol + GDP + H(+). It participates in protein modification; protein glycosylation. Mannosylates Man(2)GlcNAc(2)-dolichol diphosphate and Man(1)GlcNAc(2)-dolichol diphosphate to form Man(3)GlcNAc(2)-dolichol diphosphate. This chain is Alpha-1,3/1,6-mannosyltransferase alg-2 (alg-2), found in Neurospora crassa (strain ATCC 24698 / 74-OR23-1A / CBS 708.71 / DSM 1257 / FGSC 987).